Reading from the N-terminus, the 322-residue chain is HPr kinase/phosphorylase (322 aa).

Residues H146 and K167 contribute to the active site. G161 to S168 serves as a coordination point for ATP. S168 lines the Mg(2+) pocket. D185 serves as the catalytic Proton acceptor; for phosphorylation activity. Proton donor; for dephosphorylation activity. An important for the catalytic mechanism of both phosphorylation and dephosphorylation region spans residues L209 to D218. E210 provides a ligand contact to Mg(2+). R250 is an active-site residue. The interval Q271–R276 is important for the catalytic mechanism of dephosphorylation.

This sequence belongs to the HPrK/P family. In terms of assembly, homohexamer. The cofactor is Mg(2+).

The enzyme catalyses [HPr protein]-L-serine + ATP = [HPr protein]-O-phospho-L-serine + ADP + H(+). It carries out the reaction [HPr protein]-O-phospho-L-serine + phosphate + H(+) = [HPr protein]-L-serine + diphosphate. Functionally, catalyzes the ATP- as well as the pyrophosphate-dependent phosphorylation of a specific serine residue in HPr, a phosphocarrier protein of the phosphoenolpyruvate-dependent sugar phosphotransferase system (PTS). HprK/P also catalyzes the pyrophosphate-producing, inorganic phosphate-dependent dephosphorylation (phosphorolysis) of seryl-phosphorylated HPr (P-Ser-HPr). The chain is HPr kinase/phosphorylase from Burkholderia mallei (strain NCTC 10247).